Here is a 242-residue protein sequence, read N- to C-terminus: MSNTDNIFSAPIDKIGDFTFDARVAEVFPDMIQRSVPGYSNIISAIGMLAERFVKPHSNIYDLGCSLGAATLSMRRHIQQEGCTIFAIDNSEAMVERCKLHVNAYRSDTPVEVIEADIREVEIKDASVVVLNFTLQFLSPDDRYALLEKIHAGLRPGGILILSEKYVFEDESSNELLIDLHHDFKRANGYSELEVSQKRSAIENVMRPDSITVHKQRFEKIGFSSSEVWFQCFNFGSMFAIK.

S-adenosyl-L-methionine contacts are provided by residues tyrosine 39, 64 to 66 (GCS), 89 to 90 (DN), 117 to 118 (DI), asparagine 132, and arginine 199.

This sequence belongs to the class I-like SAM-binding methyltransferase superfamily. Cx-SAM synthase family. In terms of assembly, homodimer.

It catalyses the reaction prephenate + S-adenosyl-L-methionine = carboxy-S-adenosyl-L-methionine + 3-phenylpyruvate + H2O. Functionally, catalyzes the conversion of S-adenosyl-L-methionine (SAM) to carboxy-S-adenosyl-L-methionine (Cx-SAM). In Vibrio atlanticus (strain LGP32) (Vibrio splendidus (strain Mel32)), this protein is Carboxy-S-adenosyl-L-methionine synthase.